The sequence spans 110 residues: uncharacterized protein (110 aa).

The segment covering 1–20 (MNQQNQKISNPQTPVPTTSE) has biased composition (polar residues). Residues 1-24 (MNQQNQKISNPQTPVPTTSEMNDR) form a disordered region.

This is an uncharacterized protein from Bacillus subtilis (strain 168).